Consider the following 405-residue polypeptide: MSSVSQARSLGKYFLLMDNMLVVMGFYVVFPLISIRFVDQLGWAALLVGIALGLRQFIQQGLGIFGGAFADRLGAKPMIIAGMLMRALGFVLMGIADEPWLLWLSCALSALGGTLFDPPRTALVIKLTRPWERGRFYSLLMMQDSACSVIGALLGSWLLRYDFKLVCLAGAVLFVFAAIFNAWLLPGYRISTVRAPMLEGMRRVLRDQRFVTYVLTLTGYYMLSVQVMLMLPIRINEVAGQPAAVKWMYAIEAALSLSLLYPIARWSEKRFRLETRLMAGLTVMLLSLFPIGLIEDLRALFMLIGLFYIGSIIAEPARETLGASLADNRARGSYMGFSRLGLALGGAIGYSGGGWLYDVGNRLEIPQLPWFMLGLIGFITLLGLYRQFQQRPIEPAMLNGRGEGS.

A run of 12 helical transmembrane segments spans residues Tyr13 to Ile33, Ser34 to Leu54, Met78 to Ile95, Pro99 to Phe116, Leu139 to Leu159, Leu165 to Leu185, Tyr213 to Ile233, Ala243 to Ile263, Leu277 to Leu297, Ala299 to Glu319, Leu340 to Gly360, and Ile365 to Tyr385.

The protein belongs to the major facilitator superfamily. DHA1 family. MdtH (TC 2.A.1.2.21) subfamily.

It localises to the cell inner membrane. This chain is Multidrug resistance protein MdtH, found in Sodalis glossinidius (strain morsitans).